Here is a 250-residue protein sequence, read N- to C-terminus: MNICLLDESGAGDGALSVLAARWQLEHDDSAPMALVLTPQHLELRKRDEPKLGGIFVDFVSGAMAHRRKFGGGRGEAVAKAVGIKSGYLPDVVDATAGLGRDAFVLAALGCRVRMLERNPVVAALLDDGLRRGYADVEIGPWLRENLTLLHASSLSALTDITPQPDVVYLDPMYPHKQKSALVKKEMRVFQSLVGADEDADGLLQPARTLAKKRVVVKRPDYAPPLAGLTTPNAVNTKSHRFDIYAPLTR.

S-adenosyl-L-methionine-binding positions include 101–102 (RD), 117–118 (ER), 153–154 (SS), and D171.

The protein belongs to the methyltransferase superfamily. RsmJ family.

The protein localises to the cytoplasm. It catalyses the reaction guanosine(1516) in 16S rRNA + S-adenosyl-L-methionine = N(2)-methylguanosine(1516) in 16S rRNA + S-adenosyl-L-homocysteine + H(+). Specifically methylates the guanosine in position 1516 of 16S rRNA. The chain is Ribosomal RNA small subunit methyltransferase J from Erwinia tasmaniensis (strain DSM 17950 / CFBP 7177 / CIP 109463 / NCPPB 4357 / Et1/99).